The sequence spans 702 residues: Zinc finger CCCH domain-containing protein 62 (702 aa).

The segment at 1 to 77 (MAAPAADDDD…SYDDPTFDPA (77 aa)) is disordered. A compositionally biased stretch (acidic residues) spans 18-54 (EEDDGEEEEGSEEEVESDDEEEEEGEGYDWSEEDDPE). The region spanning 132–166 (LEKLKVYECKAYLRMHKLRLSGNKEVLLTRIRGQI) is the SAP domain. Disordered regions lie at residues 288–349 (EKHA…NTVQ), 405–532 (SRTS…QQQP), 546–602 (GGTS…RETH), and 634–673 (QMSQ…NPQR). Residues 298–325 (KTREVRIKDKENERMRRLNRNKENKSKG) show a composition bias toward basic and acidic residues. Polar residues-rich tracts occupy residues 326 to 349 (QDNM…NTVQ) and 405 to 419 (SRTS…QAPS). The segment covering 430–448 (QQQQQQQPPKSIKPAPIQQ) has biased composition (low complexity). Polar residues-rich tracts occupy residues 472-502 (SQEQ…QHGG), 522-532 (QQAVSYTQQQP), 546-565 (GGTS…NWGS), and 575-591 (PFTQ…NGSG). The C3H1-type zinc-finger motif lies at 674 to 702 (FRPWKPCFIYQQQGWCPYGENCKFMHDLR).

The polypeptide is Zinc finger CCCH domain-containing protein 62 (Oryza sativa subsp. japonica (Rice)).